We begin with the raw amino-acid sequence, 227 residues long: Small ribosomal subunit protein uS7 (227 aa).

2 stretches are compositionally biased toward acidic residues: residues 1–12 (MSESDTDPDIDD) and 20–31 (NDVDVAVDESES). A disordered region spans residues 1–43 (MSESDTDPDIDDDAHNNGDNDVDVAVDESESAETTTDTDTASA). Residues 32–43 (AETTTDTDTASA) are compositionally biased toward low complexity.

This sequence belongs to the universal ribosomal protein uS7 family. As to quaternary structure, part of the 30S ribosomal subunit.

In terms of biological role, one of the primary rRNA binding proteins, it binds directly to 16S rRNA where it nucleates assembly of the head domain of the 30S subunit. Is located at the subunit interface close to the decoding center. The polypeptide is Small ribosomal subunit protein uS7 (Haloquadratum walsbyi (strain DSM 16790 / HBSQ001)).